The sequence spans 359 residues: GTP cyclohydrolase FolE2 (359 aa).

Belongs to the GTP cyclohydrolase IV family.

The catalysed reaction is GTP + H2O = 7,8-dihydroneopterin 3'-triphosphate + formate + H(+). It participates in cofactor biosynthesis; 7,8-dihydroneopterin triphosphate biosynthesis; 7,8-dihydroneopterin triphosphate from GTP: step 1/1. Functionally, converts GTP to 7,8-dihydroneopterin triphosphate. The sequence is that of GTP cyclohydrolase FolE2 from Cereibacter sphaeroides (strain KD131 / KCTC 12085) (Rhodobacter sphaeroides).